The following is a 144-amino-acid chain: RxLR effector protein PITG_03192 (144 aa).

An N-terminal signal peptide occupies residues 1–24 (MRVGFVFALLVVSVIVCFNGLTSA). Positions 49-58 (RNLRASGEER) match the RxLR-dEER motif. A glycan (N-linked (GlcNAc...) asparagine) is linked at asparagine 115. A helical transmembrane segment spans residues 122–142 (FFILATLVMFPIGVWAVVTNY).

Belongs to the RxLR effector family. Interacts with the C-terminal portions the ER-associated potato NAC transcription factors NTP1 and NTP2.

It is found in the secreted. Its subcellular location is the host endoplasmic reticulum membrane. Functionally, effector that is required for full virulence. Targets host NTP1 and NTP2 transcription factors and prevents their pathogen-associated molecular pattern (PAMP)-triggered re-localization from the endoplasmic reticulum into the nucleus, where they contribute to prevent disease progression by P.infestans. This is RxLR effector protein PITG_03192 from Phytophthora infestans (strain T30-4) (Potato late blight agent).